Reading from the N-terminus, the 193-residue chain is Ribosome maturation factor RimM (193 aa).

The PRC barrel domain occupies 112 to 193 (VDEYYWIDLI…CITVDWGLDF (82 aa)).

This sequence belongs to the RimM family. Binds ribosomal protein uS19.

The protein localises to the cytoplasm. Functionally, an accessory protein needed during the final step in the assembly of 30S ribosomal subunit, possibly for assembly of the head region. Essential for efficient processing of 16S rRNA. May be needed both before and after RbfA during the maturation of 16S rRNA. It has affinity for free ribosomal 30S subunits but not for 70S ribosomes. This chain is Ribosome maturation factor RimM, found in Methylibium petroleiphilum (strain ATCC BAA-1232 / LMG 22953 / PM1).